The chain runs to 464 residues: Cysteine--tRNA ligase (464 aa).

Cys32 lines the Zn(2+) pocket. Residues 34-44 (VTVYDDCHIGH) carry the 'HIGH' region motif. Residues Cys213, His238, and Glu242 each coordinate Zn(2+). Residues 270–274 (KMSKS) carry the 'KMSKS' region motif. Residue Lys273 participates in ATP binding.

It belongs to the class-I aminoacyl-tRNA synthetase family. Monomer. It depends on Zn(2+) as a cofactor.

It localises to the cytoplasm. It catalyses the reaction tRNA(Cys) + L-cysteine + ATP = L-cysteinyl-tRNA(Cys) + AMP + diphosphate. This is Cysteine--tRNA ligase from Francisella tularensis subsp. holarctica (strain LVS).